We begin with the raw amino-acid sequence, 366 residues long: MAFAGLKKQINKANQYMTEKMGGAEGTKLDMDFMEMERKTDVTVELVEELQLKTKEFLQPNPTARAKMAAVKGISKLSGQAKSNTYPQPEGLLAECMLTYGKKLGEDNSVFAQALVEFGEALKQMADVKYSLDDNIKQNFLEPLHHMQTKDLKEVMHHRKKLQGRRLDFDCKRRRQAKDDEIRGAEDKFGESLQLAQVGMFNLLENDTEHVSQLVTFAEALYDFHSQCADVLRGLQETLQEKRSEAESRPRNEFVPKTLLDLNLDGGGGGLNEDGTPSHISSSASPLPSPMRSPAKSMAVTPQRQQQPCCQALYDFDPENPGELGFKENDIITLLNRVDDNWYEGSVNGRTGYFPQSYVQVQVPLP.

The 231-residue stretch at 18 to 248 folds into the BAR domain; that stretch reads TEKMGGAEGT…LQEKRSEAES (231 aa). The stretch at 227–247 forms a coiled coil; the sequence is QCADVLRGLQETLQEKRSEAE. The segment at 266–295 is disordered; it reads GGGGGLNEDGTPSHISSSASPLPSPMRSPA. The span at 277-294 shows a compositional bias: low complexity; that stretch reads PSHISSSASPLPSPMRSP. Positions 305–364 constitute an SH3 domain; that stretch reads QQQPCCQALYDFDPENPGELGFKENDIITLLNRVDDNWYEGSVNGRTGYFPQSYVQVQVP.

Belongs to the endophilin family.

The protein localises to the cytoplasm. The protein resides in the membrane. In terms of biological role, required presynaptically at the neuromuscular junction. Implicated in synaptic vesicle endocytosis. The polypeptide is Endophilin-A (Drosophila willistoni (Fruit fly)).